Here is a 635-residue protein sequence, read N- to C-terminus: Threonine--tRNA ligase (635 aa).

Residues Met1–Thr61 form the TGS domain. Positions Asp242 to Pro532 are catalytic. Cys333, His384, and His509 together coordinate Zn(2+).

This sequence belongs to the class-II aminoacyl-tRNA synthetase family. As to quaternary structure, homodimer. Zn(2+) is required as a cofactor.

It is found in the cytoplasm. The catalysed reaction is tRNA(Thr) + L-threonine + ATP = L-threonyl-tRNA(Thr) + AMP + diphosphate + H(+). Its function is as follows. Catalyzes the attachment of threonine to tRNA(Thr) in a two-step reaction: L-threonine is first activated by ATP to form Thr-AMP and then transferred to the acceptor end of tRNA(Thr). Also edits incorrectly charged L-seryl-tRNA(Thr). The chain is Threonine--tRNA ligase from Clostridium botulinum (strain Langeland / NCTC 10281 / Type F).